The chain runs to 508 residues: Pentatricopeptide repeat-containing protein At3g04130, mitochondrial (508 aa).

A mitochondrion-targeting transit peptide spans 1–74 (MSWLIQNRIG…DSEDDVFKRL (74 aa)). 10 PPR repeats span residues 120–150 (SSDA…MRGD), 154–188 (TLNT…GLEK), 189–219 (NTES…LKSH), 223–257 (NAHT…GFRP), 258–292 (CVIS…GSPP), 293–327 (NSIT…GCKP), 328–363 (DSLF…GVSI), 364–398 (NTST…NLCN), 400–434 (DVHT…HHLS), and 436–470 (DEST…DITP).

It belongs to the PPR family. P subfamily.

The protein resides in the mitochondrion. This chain is Pentatricopeptide repeat-containing protein At3g04130, mitochondrial, found in Arabidopsis thaliana (Mouse-ear cress).